The chain runs to 352 residues: MSGNTFGKIFTVTTCGESHGDSLAAIIDGCPSNIPLCEAYIQLELDRRKPGQSKFTTQRKEPDEVKIISGVFEGKTTGTPIGLIIKNQDQKSKDYSEIKDKFRPGHADYTYFKKYGIRDYRGGGRSSARETAMRVAAGAIAKKILKHYGIEIYGFCSQIGSLKIDFIDKDFINQNPFFIANKNAVPACEDLIHSIRKQGDSIGAEVTVVATGLEAGLGRPVFDRLDASIAYAMMSINAVKAVSIGDGFDCVAQKGSQHRDEITQQQGFLSNHAGGILGGISTGQDIIAKLAFKPTSSILQPGKSIDVQGNDTTVITKGRHDPCVGIRGVPIAEAMLALVLVDELLITRSYRD.

Position 48 (arginine 48) interacts with NADP(+). Residues 125–127, 237–238, glycine 278, 293–297, and arginine 319 contribute to the FMN site; these read RSS, NA, and KPTSS.

It belongs to the chorismate synthase family. Homotetramer. It depends on FMNH2 as a cofactor.

It carries out the reaction 5-O-(1-carboxyvinyl)-3-phosphoshikimate = chorismate + phosphate. The protein operates within metabolic intermediate biosynthesis; chorismate biosynthesis; chorismate from D-erythrose 4-phosphate and phosphoenolpyruvate: step 7/7. Its function is as follows. Catalyzes the anti-1,4-elimination of the C-3 phosphate and the C-6 proR hydrogen from 5-enolpyruvylshikimate-3-phosphate (EPSP) to yield chorismate, which is the branch point compound that serves as the starting substrate for the three terminal pathways of aromatic amino acid biosynthesis. This reaction introduces a second double bond into the aromatic ring system. The sequence is that of Chorismate synthase from Francisella tularensis subsp. holarctica (strain FTNF002-00 / FTA).